The primary structure comprises 173 residues: Large ribosomal subunit protein uL16 (173 aa).

The protein belongs to the universal ribosomal protein uL16 family.

The chain is Large ribosomal subunit protein uL16 from Methanosphaerula palustris (strain ATCC BAA-1556 / DSM 19958 / E1-9c).